Reading from the N-terminus, the 331-residue chain is Adenine deaminase (331 aa).

Zn(2+)-binding residues include His17, His19, and His197. Glu200 (proton donor) is an active-site residue. Asp278 is a binding site for Zn(2+). Residue Asp279 coordinates substrate.

It belongs to the metallo-dependent hydrolases superfamily. Adenosine and AMP deaminases family. Adenine deaminase type 2 subfamily. The cofactor is Zn(2+).

The enzyme catalyses adenine + H2O + H(+) = hypoxanthine + NH4(+). In terms of biological role, catalyzes the hydrolytic deamination of adenine to hypoxanthine. Plays an important role in the purine salvage pathway and in nitrogen catabolism. This chain is Adenine deaminase, found in Wolinella succinogenes (strain ATCC 29543 / DSM 1740 / CCUG 13145 / JCM 31913 / LMG 7466 / NCTC 11488 / FDC 602W) (Vibrio succinogenes).